The chain runs to 280 residues: Aspartate/glutamate leucyltransferase (280 aa).

The protein belongs to the R-transferase family. Bpt subfamily.

The protein resides in the cytoplasm. It carries out the reaction N-terminal L-glutamyl-[protein] + L-leucyl-tRNA(Leu) = N-terminal L-leucyl-L-glutamyl-[protein] + tRNA(Leu) + H(+). The enzyme catalyses N-terminal L-aspartyl-[protein] + L-leucyl-tRNA(Leu) = N-terminal L-leucyl-L-aspartyl-[protein] + tRNA(Leu) + H(+). In terms of biological role, functions in the N-end rule pathway of protein degradation where it conjugates Leu from its aminoacyl-tRNA to the N-termini of proteins containing an N-terminal aspartate or glutamate. The sequence is that of Aspartate/glutamate leucyltransferase from Cereibacter sphaeroides (strain ATCC 17023 / DSM 158 / JCM 6121 / CCUG 31486 / LMG 2827 / NBRC 12203 / NCIMB 8253 / ATH 2.4.1.) (Rhodobacter sphaeroides).